A 437-amino-acid polypeptide reads, in one-letter code: Putative galacturan 1,4-alpha-galacturonidase A (437 aa).

An N-terminal signal peptide occupies residues methionine 1–alanine 20. N-linked (GlcNAc...) asparagine glycans are attached at residues asparagine 30, asparagine 101, asparagine 110, asparagine 161, asparagine 196, and asparagine 203. A PbH1 1 repeat occupies serine 222–proline 243. The active-site Proton donor is aspartate 236. N-linked (GlcNAc...) asparagine glycans are attached at residues asparagine 244, asparagine 252, asparagine 278, asparagine 324, asparagine 352, asparagine 371, asparagine 382, and asparagine 387. 3 PbH1 repeats span residues serine 245 to serine 265, valine 276 to serine 302, and valine 322 to threonine 343. An intrachain disulfide couples cysteine 396 to cysteine 402.

It belongs to the glycosyl hydrolase 28 family.

The protein localises to the secreted. The enzyme catalyses [(1-&gt;4)-alpha-D-galacturonosyl](n) + H2O = alpha-D-galacturonate + [(1-&gt;4)-alpha-D-galacturonosyl](n-1). Functionally, specific in hydrolyzing the terminal glycosidic bond of polygalacturonic acid and oligogalacturonates. The polypeptide is Putative galacturan 1,4-alpha-galacturonidase A (rgxA) (Aspergillus flavus (strain ATCC 200026 / FGSC A1120 / IAM 13836 / NRRL 3357 / JCM 12722 / SRRC 167)).